Consider the following 179-residue polypeptide: Large ribosomal subunit protein uL6 (179 aa).

Belongs to the universal ribosomal protein uL6 family. Part of the 50S ribosomal subunit.

Its function is as follows. This protein binds to the 23S rRNA, and is important in its secondary structure. It is located near the subunit interface in the base of the L7/L12 stalk, and near the tRNA binding site of the peptidyltransferase center. The sequence is that of Large ribosomal subunit protein uL6 from Mycobacterium sp. (strain KMS).